Consider the following 164-residue polypeptide: UPF0304 protein YfbU (164 aa).

This sequence belongs to the UPF0304 family.

In Escherichia coli O127:H6 (strain E2348/69 / EPEC), this protein is UPF0304 protein YfbU.